A 282-amino-acid chain; its full sequence is MYFKRYLQLAKPGIIFGNLITLTGGFLLATHREIGFEYLPLFVYVMIGVALMIAAGCVFNNIYDKDIDSSMTRTQNRPLVTGDISVIQATIYGTILLILSCLVLYYLVNLLTLWIIIIGFIVYVGIYTVSKRLTIHATVLGGISGAIPPVAGYTAVVNILDYNALALFLILFFWQIPHSYAIAMLYIDDYKKVKLPMLPIVKGIACTKKIMLFYLALFVVSCALPAVLGSADLFSFIVCMLVALFWMYKSIQSYRTDTDRVFAKTVFKFSIIVITAICLTMG.

9 helical membrane passes run L9 to A29, L39 to F59, L79 to L99, L102 to V122, V139 to I159, L165 to L185, I210 to S230, A231 to I251, and V261 to M281.

Belongs to the UbiA prenyltransferase family. Protoheme IX farnesyltransferase subfamily.

It is found in the cell inner membrane. It catalyses the reaction heme b + (2E,6E)-farnesyl diphosphate + H2O = Fe(II)-heme o + diphosphate. It functions in the pathway porphyrin-containing compound metabolism; heme O biosynthesis; heme O from protoheme: step 1/1. Functionally, converts heme B (protoheme IX) to heme O by substitution of the vinyl group on carbon 2 of heme B porphyrin ring with a hydroxyethyl farnesyl side group. The protein is Protoheme IX farnesyltransferase of Francisella tularensis subsp. holarctica (strain FTNF002-00 / FTA).